The following is a 439-amino-acid chain: tRNA-2-methylthio-N(6)-dimethylallyladenosine synthase (439 aa).

Positions 2–119 constitute an MTTase N-terminal domain; the sequence is KKLYLKTHGC…LPDLLDSVIQ (118 aa). Residues Cys-11, Cys-48, Cys-82, Cys-156, Cys-160, and Cys-163 each coordinate [4Fe-4S] cluster. The Radical SAM core domain maps to 142–374; the sequence is RAEGPSAFVS…QNRINAKAAE (233 aa). One can recognise a TRAM domain in the interval 377–439; sequence QSMVGTQQRI…RPYSLWGEIC (63 aa).

Belongs to the methylthiotransferase family. MiaB subfamily. In terms of assembly, monomer. The cofactor is [4Fe-4S] cluster.

It localises to the cytoplasm. It catalyses the reaction N(6)-dimethylallyladenosine(37) in tRNA + (sulfur carrier)-SH + AH2 + 2 S-adenosyl-L-methionine = 2-methylsulfanyl-N(6)-dimethylallyladenosine(37) in tRNA + (sulfur carrier)-H + 5'-deoxyadenosine + L-methionine + A + S-adenosyl-L-homocysteine + 2 H(+). Catalyzes the methylthiolation of N6-(dimethylallyl)adenosine (i(6)A), leading to the formation of 2-methylthio-N6-(dimethylallyl)adenosine (ms(2)i(6)A) at position 37 in tRNAs that read codons beginning with uridine. This is tRNA-2-methylthio-N(6)-dimethylallyladenosine synthase from Coxiella burnetii (strain CbuK_Q154) (Coxiella burnetii (strain Q154)).